Reading from the N-terminus, the 87-residue chain is Acyl-CoA-binding protein (87 aa).

An N-acetylserine modification is found at S2. The 86-residue stretch at 2–87 folds into the ACB domain; that stretch reads SQAEFEKAAE…VEELKQKYGI (86 aa). An N6-acetyllysine; alternate modification is found at K8. Residue K8 is modified to N6-succinyllysine; alternate. Residue K14 participates in an acyl-CoA binding. An N6-succinyllysine modification is found at K17. K19 carries the post-translational modification N6-acetyllysine. Y29 is modified (phosphotyrosine). Residues 29 to 33, K51, K55, and Y74 each bind an acyl-CoA; that span reads YSHYK. K51 bears the N6-acetyllysine mark. K55 is modified (N6-acetyllysine; alternate). N6-succinyllysine; alternate is present on K55. An N6-(2-hydroxyisobutyryl)lysine; alternate modification is found at K55. Residue K55 is modified to N6-malonyllysine; alternate. Residue K77 is modified to N6-acetyllysine; alternate. Position 77 is an N6-succinyllysine; alternate (K77).

This sequence belongs to the ACBP family. In terms of assembly, monomer.

It is found in the endoplasmic reticulum. The protein resides in the golgi apparatus. Functionally, binds medium- and long-chain acyl-CoA esters with very high affinity and may function as an intracellular carrier of acyl-CoA esters. It is also able to displace diazepam from the benzodiazepine (BZD) recognition site located on the GABA type A receptor. It is therefore possible that this protein also acts as a neuropeptide to modulate the action of the GABA receptor. This Oryctolagus cuniculus (Rabbit) protein is Acyl-CoA-binding protein (DBI).